A 20-amino-acid polypeptide reads, in one-letter code: Allergen Asp fl 2 (20 aa).

The protein is Allergen Asp fl 2 of Aspergillus flavus.